The chain runs to 255 residues: NAD kinase (255 aa).

Catalysis depends on Asp44, which acts as the Proton acceptor. NAD(+)-binding positions include 44–45 (DG), His49, 114–115 (NE), Asp144, Ala152, 155–160 (SAYNLS), and Gln216.

The protein belongs to the NAD kinase family. Requires a divalent metal cation as cofactor.

Its subcellular location is the cytoplasm. It catalyses the reaction NAD(+) + ATP = ADP + NADP(+) + H(+). Its function is as follows. Involved in the regulation of the intracellular balance of NAD and NADP, and is a key enzyme in the biosynthesis of NADP. Catalyzes specifically the phosphorylation on 2'-hydroxyl of the adenosine moiety of NAD to yield NADP. The sequence is that of NAD kinase from Rickettsia prowazekii (strain Madrid E).